The sequence spans 220 residues: Protein CREG1 (220 aa).

The signal sequence occupies residues 1–31 (MAGLSRGSARALLAALLASTLLALLVSPARG). N-linked (GlcNAc...) asparagine glycosylation is found at asparagine 160, asparagine 193, and asparagine 216.

The protein belongs to the CREG family. Homodimer. Interacts with IGF2R; the interaction is dependent on glycosylation. In terms of processing, N-glycosylated.

It localises to the secreted. May contribute to the transcriptional control of cell growth and differentiation. Antagonizes transcriptional activation and cellular transformation by the adenovirus E1A protein. The transcriptional control activity of cell growth requires interaction with IGF2R. This is Protein CREG1 (CREG1) from Homo sapiens (Human).